Reading from the N-terminus, the 307-residue chain is 3-ketodihydrosphingosine reductase TSC10 (307 aa).

An NADP(+)-binding site is contributed by Leu-11. Residues Gly-14, Ser-16, and Gly-18 each contribute to the NADPH site. A GXSXG motif is present at residues 14–18; sequence GGSQG. Residue Leu-19 coordinates NADP(+). NADPH-binding residues include Arg-40, Lys-44, and Leu-74. Ser-147 functions as the Proton donor in the catalytic mechanism. 3 residues coordinate NADP(+): Tyr-161, Lys-165, and Ser-194. Tyr-161 serves as the catalytic Proton acceptor. Lys-165 acts as the Lowers pKa of active site Tyr in catalysis. A helical membrane pass occupies residues 261–281; that stretch reads YFLWPLGWLLGALVNLLVVPI.

The protein belongs to the short-chain dehydrogenases/reductases (SDR) family.

It localises to the endoplasmic reticulum membrane. The enzyme catalyses sphinganine + NADP(+) = 3-oxosphinganine + NADPH + H(+). It functions in the pathway lipid metabolism; sphingolipid metabolism. In terms of biological role, catalyzes the reduction of 3'-oxosphinganine (3-ketodihydrosphingosine/KDS) to sphinganine (dihydrosphingosine/DHS), the second step of de novo sphingolipid biosynthesis. This is 3-ketodihydrosphingosine reductase TSC10 (TSC10) from Eremothecium gossypii (strain ATCC 10895 / CBS 109.51 / FGSC 9923 / NRRL Y-1056) (Yeast).